Here is a 251-residue protein sequence, read N- to C-terminus: uncharacterized protein (251 aa).

Residues 3-118 (KVIICDDERI…QLEHILDILV (116 aa)) enclose the Response regulatory domain. At Asp-55 the chain carries 4-aspartylphosphate. One can recognise an HTH araC/xylS-type domain in the interval 152–249 (NQILSQIKQH…HMSPSDYNKQ (98 aa)). 2 DNA-binding regions (H-T-H motif) span residues 169-190 (LDLI…KEHV) and 216-239 (HYEI…KKYL).

Phosphorylated by SERP2405.

It localises to the cytoplasm. Functionally, probable member of the two-component regulatory system SERP2405/SERP2406. This is an uncharacterized protein from Staphylococcus epidermidis (strain ATCC 35984 / DSM 28319 / BCRC 17069 / CCUG 31568 / BM 3577 / RP62A).